We begin with the raw amino-acid sequence, 96 residues long: UPF0235 protein Spro_4033 (96 aa).

Belongs to the UPF0235 family.

In Serratia proteamaculans (strain 568), this protein is UPF0235 protein Spro_4033.